The primary structure comprises 150 residues: uncharacterized protein (150 aa).

Residues 1–19 (MNDDSSSSSSGDSSDGSSG) show a composition bias toward low complexity. Disordered stretches follow at residues 1–21 (MNDD…SGTT) and 85–131 (EPEA…AYPE). Over residues 106–115 (RPPPTEPPTV) the composition is skewed to pro residues.

This is an uncharacterized protein from Schizosaccharomyces pombe (strain 972 / ATCC 24843) (Fission yeast).